We begin with the raw amino-acid sequence, 359 residues long: Guanine nucleotide-binding protein subunit alpha-11 (359 aa).

S-palmitoyl cysteine attachment occurs at residues cysteine 9 and cysteine 10. The 322-residue stretch at 38–359 (RELKLLLLGT…QLNLKEYNLV (322 aa)) folds into the G-alpha domain. Residues 41–54 (KLLLLGTGESGKST) form a G1 motif region. GTP-binding positions include 46–53 (GTGESGKS) and 180–183 (LRVR). Serine 53 provides a ligand contact to Mg(2+). The tract at residues 178–186 (DVLRVRVPT) is G2 motif. Threonine 186 is a Mg(2+) binding site. The segment at 201-210 (FRMVDVGGQR) is G3 motif. Glutamine 209 carries the post-translational modification Deamidated glutamine; by Photorhabdus PAU_02230. A G4 motif region spans residues 270 to 277 (ILFLNKKD). Residues 274 to 277 (NKKD) and alanine 331 contribute to the GTP site. A G5 motif region spans residues 329 to 334 (TCATDT).

This sequence belongs to the G-alpha family. G(q) subfamily. As to quaternary structure, g proteins are composed of 3 units; alpha, beta and gamma. The alpha chain contains the guanine nucleotide binding site. Interacts with RGS22. Interacts with NTSR1. (Microbial infection) Interacts with human cytomegalovirus (HHV-5) US28. In terms of processing, (Microbial infection) Deamidated at Gln-209 by Photorhabdus asymbiotica toxin PAU_02230, blocking GTP hydrolysis of heterotrimeric GNAQ or GNA11 and G-alphai (GNAI1, GNAI2 or GNAI3) proteins, thereby activating RhoA. As to expression, expressed in testis.

The protein resides in the cell membrane. It is found in the cytoplasm. The catalysed reaction is GTP + H2O = GDP + phosphate + H(+). In terms of biological role, guanine nucleotide-binding proteins (G proteins) function as transducers downstream of G protein-coupled receptors (GPCRs) in numerous signaling cascades. The alpha chain contains the guanine nucleotide binding site and alternates between an active, GTP-bound state and an inactive, GDP-bound state. Signaling by an activated GPCR promotes GDP release and GTP binding. The alpha subunit has a low GTPase activity that converts bound GTP to GDP, thereby terminating the signal. Both GDP release and GTP hydrolysis are modulated by numerous regulatory proteins. Signaling is mediated via phospholipase C-beta-dependent inositol lipid hydrolysis for signal propagation: activates phospholipase C-beta: following GPCR activation, GNA11 activates PLC-beta (PLCB1, PLCB2, PLCB3 or PLCB4), leading to production of diacylglycerol (DAG) and inositol 1,4,5-trisphosphate (IP3). Transduces FFAR4 signaling in response to long-chain fatty acids (LCFAs). Together with GNAQ, required for heart development. In the respiratory epithelium, transmits OXGR1-dependent signals that lead to downstream intracellular Ca(2+) release and mucocilliary clearance of airborne pathogens. The chain is Guanine nucleotide-binding protein subunit alpha-11 (GNA11) from Homo sapiens (Human).